The chain runs to 62 residues: Photosystem II reaction center protein Z (62 aa).

A run of 2 helical transmembrane segments spans residues 8–28 (AVFA…VVFA) and 41–61 (FSGT…NSLI).

It belongs to the PsbZ family. As to quaternary structure, PSII is composed of 1 copy each of membrane proteins PsbA, PsbB, PsbC, PsbD, PsbE, PsbF, PsbH, PsbI, PsbJ, PsbK, PsbL, PsbM, PsbT, PsbY, PsbZ, Psb30/Ycf12, at least 3 peripheral proteins of the oxygen-evolving complex and a large number of cofactors. It forms dimeric complexes.

Its subcellular location is the plastid. The protein resides in the chloroplast thylakoid membrane. In terms of biological role, may control the interaction of photosystem II (PSII) cores with the light-harvesting antenna, regulates electron flow through the 2 photosystem reaction centers. PSII is a light-driven water plastoquinone oxidoreductase, using light energy to abstract electrons from H(2)O, generating a proton gradient subsequently used for ATP formation. The sequence is that of Photosystem II reaction center protein Z from Nicotiana sylvestris (Wood tobacco).